The primary structure comprises 435 residues: 3-phosphoshikimate 1-carboxyvinyltransferase (435 aa).

K25, S26, and R30 together coordinate 3-phosphoshikimate. K25 lines the phosphoenolpyruvate pocket. G99 and R130 together coordinate phosphoenolpyruvate. Positions 176, 177, 178, 204, 319, 342, and 346 each coordinate 3-phosphoshikimate. Q178 contacts phosphoenolpyruvate. D319 acts as the Proton acceptor in catalysis. R350, R394, and K419 together coordinate phosphoenolpyruvate.

It belongs to the EPSP synthase family. In terms of assembly, monomer.

It localises to the cytoplasm. It carries out the reaction 3-phosphoshikimate + phosphoenolpyruvate = 5-O-(1-carboxyvinyl)-3-phosphoshikimate + phosphate. Its pathway is metabolic intermediate biosynthesis; chorismate biosynthesis; chorismate from D-erythrose 4-phosphate and phosphoenolpyruvate: step 6/7. Catalyzes the transfer of the enolpyruvyl moiety of phosphoenolpyruvate (PEP) to the 5-hydroxyl of shikimate-3-phosphate (S3P) to produce enolpyruvyl shikimate-3-phosphate and inorganic phosphate. The chain is 3-phosphoshikimate 1-carboxyvinyltransferase from Haemophilus ducreyi (strain 35000HP / ATCC 700724).